A 163-amino-acid polypeptide reads, in one-letter code: Cyclic pyranopterin monophosphate synthase (163 aa).

Residues 75 to 77 (LCH) and 115 to 116 (ME) contribute to the substrate site. Residue Asp-130 is part of the active site.

The protein belongs to the MoaC family. Homohexamer; trimer of dimers.

The catalysed reaction is (8S)-3',8-cyclo-7,8-dihydroguanosine 5'-triphosphate = cyclic pyranopterin phosphate + diphosphate. The protein operates within cofactor biosynthesis; molybdopterin biosynthesis. In terms of biological role, catalyzes the conversion of (8S)-3',8-cyclo-7,8-dihydroguanosine 5'-triphosphate to cyclic pyranopterin monophosphate (cPMP). This Variovorax paradoxus (strain S110) protein is Cyclic pyranopterin monophosphate synthase.